Consider the following 91-residue polypeptide: Teretoxin Tan22.13 (91 aa).

A signal peptide spans 1 to 21 (MKVQILFALMMVLVTLCLGQK). Residues 22–24 (MQR) constitute a propeptide that is removed on maturation.

It belongs to the teretoxin C (TC) superfamily. Post-translationally, contains 4 disulfide bonds. In terms of tissue distribution, expressed by the venom duct.

The protein localises to the secreted. This Terebra anilis (Auger snail) protein is Teretoxin Tan22.13.